We begin with the raw amino-acid sequence, 602 residues long: Chaperone protein dnaK (602 aa).

This sequence belongs to the heat shock protein 70 family.

It localises to the plastid. Its subcellular location is the chloroplast. Its function is as follows. Acts as a chaperone. In Thalassiosira pseudonana (Marine diatom), this protein is Chaperone protein dnaK.